Here is a 453-residue protein sequence, read N- to C-terminus: o-phthalyl amidase (453 aa).

As to quaternary structure, monomer. The N-terminus is blocked.

The enzyme catalyses a phtalamide + H2O = phthalate + a primary amine. Its activity is regulated as follows. Inhibited by iodoacetate, p-hydroxymercuric benzoate and copper ions. Catalyzes the removal of the phthalyl group from phthalyl amides generating phthalate and an amine. The enzyme has a broad substrate specificity and hydrolyzes phthalylated amino acids, peptides, beta-lactams, aromatic and aliphatic amines; substitutions allowed on the phthalyl group include 6-F, 6-NH(2), 3-OH, and a nitrogen in the aromatic ring ortho to the carboxy group attached to the amine. This Xanthobacter agilis protein is o-phthalyl amidase.